The following is a 601-amino-acid chain: DNA topoisomerase I, mitochondrial (601 aa).

The transit peptide at 1–50 directs the protein to the mitochondrion; sequence MRVVRLLRLRAALTLLGEVPRRPASRGVPGSRRTQKGSGARWEKEKHEDG. The segment at 22–48 is disordered; it reads RPASRGVPGSRRTQKGSGARWEKEKHE. Interaction with DNA stretches follow at residues 261-262, 324-329, and 421-423; these read KY, RAGNEK, and TAK. Positions 268-601 constitute a Topo IB-type catalytic domain; that stretch reads CSKLKGETAW…LAMAGEDFEF (334 aa). Tyr559 serves as the catalytic O-(3'-phospho-DNA)-tyrosine intermediate.

It belongs to the type IB topoisomerase family. It depends on Ca(2+) as a cofactor. Mg(2+) is required as a cofactor.

It localises to the mitochondrion. It catalyses the reaction ATP-independent breakage of single-stranded DNA, followed by passage and rejoining.. Releases the supercoiling and torsional tension of DNA introduced during duplication of mitochondrial DNA by transiently cleaving and rejoining one strand of the DNA duplex. Introduces a single-strand break via transesterification at a target site in duplex DNA. The scissile phosphodiester is attacked by the catalytic tyrosine of the enzyme, resulting in the formation of a DNA-(3'-phosphotyrosyl)-enzyme intermediate and the expulsion of a 5'-OH DNA strand. The free DNA strand then rotates around the intact phosphodiester bond on the opposing strand, thus removing DNA supercoils. Finally, in the religation step, the DNA 5'-OH attacks the covalent intermediate to expel the active-site tyrosine and restore the DNA phosphodiester backbone. This Pan troglodytes (Chimpanzee) protein is DNA topoisomerase I, mitochondrial (TOP1MT).